We begin with the raw amino-acid sequence, 515 residues long: MKVFCVHPSPLMYTKVFLRLEPLGLELVAESLRRAGHDIRLMDLQVESHADFLRELDTWRPDVVCFSLNYLANVPEVIDLAKTAKSRLPECFTFVGGHSASFVAKDLLDHGEGLLDCVLRGEGEAGAPKLLETLARRGNIDEVPGVVSLTGEGPPPGFTDNLDEHLPARDLLKYRRKYFLGTLDPCASIEFSRGCPWDCSFCSAWTFYGRSYRVMSTERIMEDLRRIKEPGIFIVDDVAFIQAQHGMEIGEAIAREGIRKQYYLETRGDVLLRNKEVFKLWKKLGMEYMFLGVEAIDAEGLQKFRKRVSLGKNFEALEFARSLGITVAINLIADPDWDRERFEVIRQWCMEIPEIVNISVNTPYPGTESWHTESRQLTTRDYRLFDIQHAVLPTRLPLPEFYGELVKTQQVLYKKHMGWAAARDTLKILGGHLLRGQTNFLRSLWKFNSVFNPELQLADHRQPVKYPMTLPPAPTEQKIEAKTLYVHRSQGRKSRALDDATEKFVDEGRMGAATG.

One can recognise a B12-binding domain in the interval 8–141 (PSPLMYTKVF…ETLARRGNID (134 aa)). In terms of domain architecture, Radical SAM core spans 181 to 395 (GTLDPCASIE…DIQHAVLPTR (215 aa)). Positions 195, 199, and 202 each coordinate [4Fe-4S] cluster.

Belongs to the radical SAM superfamily. The cofactor is [4Fe-4S] cluster.

Required for methylation of hopanoids at the C-3 position. The sequence is that of Hopanoid C-3 methylase from Methylococcus capsulatus (strain ATCC 33009 / NCIMB 11132 / Bath).